The primary structure comprises 210 residues: Redox-sensing transcriptional repressor Rex (210 aa).

The H-T-H motif DNA-binding region spans 16-55 (VYSRHLTDVDRKGIVTISSGDIAEGVGVSPAQVRKDLAYF). 90-95 (GMGNLG) is an NAD(+) binding site.

This sequence belongs to the transcriptional regulatory Rex family. As to quaternary structure, homodimer.

It is found in the cytoplasm. Modulates transcription in response to changes in cellular NADH/NAD(+) redox state. This is Redox-sensing transcriptional repressor Rex from Desulfitobacterium hafniense (strain DSM 10664 / DCB-2).